Reading from the N-terminus, the 205-residue chain is dITP/XTP pyrophosphatase (205 aa).

Substrate is bound at residue 11-16 (TKNMGK). Glu-44 and Asp-73 together coordinate Mg(2+). Residue Asp-73 is the Proton acceptor of the active site. Substrate is bound by residues Ser-74, 158 to 161 (FGYD), Lys-181, and 186 to 187 (HR).

The protein belongs to the HAM1 NTPase family. In terms of assembly, homodimer. Requires Mg(2+) as cofactor.

It carries out the reaction XTP + H2O = XMP + diphosphate + H(+). It catalyses the reaction dITP + H2O = dIMP + diphosphate + H(+). The enzyme catalyses ITP + H2O = IMP + diphosphate + H(+). Functionally, pyrophosphatase that catalyzes the hydrolysis of nucleoside triphosphates to their monophosphate derivatives, with a high preference for the non-canonical purine nucleotides XTP (xanthosine triphosphate), dITP (deoxyinosine triphosphate) and ITP. Seems to function as a house-cleaning enzyme that removes non-canonical purine nucleotides from the nucleotide pool, thus preventing their incorporation into DNA/RNA and avoiding chromosomal lesions. The protein is dITP/XTP pyrophosphatase of Bacillus cereus (strain ATCC 14579 / DSM 31 / CCUG 7414 / JCM 2152 / NBRC 15305 / NCIMB 9373 / NCTC 2599 / NRRL B-3711).